We begin with the raw amino-acid sequence, 283 residues long: 2-dehydro-3-deoxyphosphooctonate aldolase (283 aa).

It belongs to the KdsA family.

The protein resides in the cytoplasm. The catalysed reaction is D-arabinose 5-phosphate + phosphoenolpyruvate + H2O = 3-deoxy-alpha-D-manno-2-octulosonate-8-phosphate + phosphate. It functions in the pathway carbohydrate biosynthesis; 3-deoxy-D-manno-octulosonate biosynthesis; 3-deoxy-D-manno-octulosonate from D-ribulose 5-phosphate: step 2/3. It participates in bacterial outer membrane biogenesis; lipopolysaccharide biosynthesis. The polypeptide is 2-dehydro-3-deoxyphosphooctonate aldolase (Vibrio campbellii (strain ATCC BAA-1116)).